The sequence spans 92 residues: Plasmid copy control protein CopR (92 aa).

Basic and acidic residues predominate over residues 1–27; sequence MELAFRESLKKMRGTKSKEKFSQELEM. Disordered regions lie at residues 1–40 and 63–92; these read MELAFRESLKKMRGTKSKEKFSQELEMSRSNYSRIESGKS and IPNEPTEPEPETEQVTLELEMEEEKSNDFV. Residues 9–62 form the HTH cro/C1-type domain; it reads LKKMRGTKSKEKFSQELEMSRSNYSRIESGKSDPTIKTLEQIVKLTNSTLVVDL. A DNA-binding region (H-T-H motif) is located at residues 20-39; the sequence is KFSQELEMSRSNYSRIESGK.

Its function is as follows. Involved in copy control of plasmid pIP501. The polypeptide is Plasmid copy control protein CopR (copR) (Streptococcus agalactiae).